Consider the following 511-residue polypeptide: ESX-1 secretion system protein EccD1 (511 aa).

Residue serine 2 is modified to N-acetylserine. Residues 2 to 143 (SAPAVAAGPT…PEFDRTALNR (142 aa)) lie on the Cytoplasmic side of the membrane. A helical transmembrane segment spans residues 144–164 (FVGAAIPLLTAPVIGMAMRAW). Residues 165–170 (WETGRS) lie on the Periplasmic side of the membrane. The chain crosses the membrane as a helical span at residues 171–191 (LWWPLAIGILGIAVLVGSFVA). Residues 192-202 (NRFYQSGHLAE) lie on the Cytoplasmic side of the membrane. Residues 203–223 (CLLVTTYLLIATAAALAVPLP) traverse the membrane as a helical segment. Residues 224 to 227 (RGVN) are Periplasmic-facing. A helical transmembrane segment spans residues 228 to 248 (SLGAPQVAGAATAVLFLTLMT). The Cytoplasmic segment spans residues 249–257 (RGGPRKRHE). Residues 258–278 (LASFAVITAIAVIAAAAAFGY) form a helical membrane-spanning segment. The Periplasmic segment spans residues 279 to 285 (GYQDWVP). Residues 286-306 (AGGIAFGLFIVTNAAKLTVAV) traverse the membrane as a helical segment. Residues 307 to 367 (ARIALPPIPV…TERSKLAKQL (61 aa)) are Cytoplasmic-facing. Transmembrane regions (helical) follow at residues 368–388 (LIGYVTSGTLILAAGAIAVVV) and 389–409 (RGHFFVHSLVVAGLITTVCGF). The Cytoplasmic portion of the chain corresponds to 410–420 (RSRLYAERWCA). The helical transmembrane segment at 421–441 (WALLAATVAIPTGLTAKLIIW) threads the bilayer. At 442 to 444 (YPH) the chain is on the periplasmic side. A helical transmembrane segment spans residues 445 to 465 (YAWLLLSVYLTVALVALVVVG). Topologically, residues 466–482 (SMAHVRRVSPVVKRTLE) are cytoplasmic. The helical transmembrane segment at 483 to 503 (LIDGAMIAAIIPMLLWITGVY) threads the bilayer. Over 504–511 (DTVRNIRF) the chain is Periplasmic.

The protein belongs to the EccD/Snm4 family. As to quaternary structure, possibly a homodimer. Part of the ESX-1 / type VII secretion system (T7SS), which is composed of cytosolic and membrane components. The ESX-1 membrane complex is composed of EccB1, EccCa1, EccCb1, EccD1 and EccE1.

Its subcellular location is the cell inner membrane. In terms of biological role, part of the ESX-1 specialized secretion system, which delivers several virulence factors to host cells during infection, including the key virulence factors EsxA (ESAT-6) and EsxB (CFP-10). The chain is ESX-1 secretion system protein EccD1 from Mycobacterium tuberculosis (strain ATCC 25618 / H37Rv).